The primary structure comprises 393 residues: Formate-dependent phosphoribosylglycinamide formyltransferase (393 aa).

N(1)-(5-phospho-beta-D-ribosyl)glycinamide is bound by residues 22 to 23 (EL) and Glu-82. Residues Arg-114, Lys-155, 160–165 (SSGKGQ), 195–198 (EGFI), and Glu-203 contribute to the ATP site. The ATP-grasp domain occupies 119-308 (RLAAEELKLP…QFALHARAIL (190 aa)). Mg(2+) is bound by residues Glu-267 and Glu-279. N(1)-(5-phospho-beta-D-ribosyl)glycinamide-binding positions include Asp-286, Lys-356, and 363-364 (RR).

Belongs to the PurK/PurT family. Homodimer.

It carries out the reaction N(1)-(5-phospho-beta-D-ribosyl)glycinamide + formate + ATP = N(2)-formyl-N(1)-(5-phospho-beta-D-ribosyl)glycinamide + ADP + phosphate + H(+). It functions in the pathway purine metabolism; IMP biosynthesis via de novo pathway; N(2)-formyl-N(1)-(5-phospho-D-ribosyl)glycinamide from N(1)-(5-phospho-D-ribosyl)glycinamide (formate route): step 1/1. In terms of biological role, involved in the de novo purine biosynthesis. Catalyzes the transfer of formate to 5-phospho-ribosyl-glycinamide (GAR), producing 5-phospho-ribosyl-N-formylglycinamide (FGAR). Formate is provided by PurU via hydrolysis of 10-formyl-tetrahydrofolate. This is Formate-dependent phosphoribosylglycinamide formyltransferase from Pseudomonas syringae pv. tomato (strain ATCC BAA-871 / DC3000).